A 123-amino-acid chain; its full sequence is Ribosome-binding factor A (123 aa).

The protein belongs to the RbfA family. Monomer. Binds 30S ribosomal subunits, but not 50S ribosomal subunits or 70S ribosomes.

It is found in the cytoplasm. Functionally, one of several proteins that assist in the late maturation steps of the functional core of the 30S ribosomal subunit. Associates with free 30S ribosomal subunits (but not with 30S subunits that are part of 70S ribosomes or polysomes). Required for efficient processing of 16S rRNA. May interact with the 5'-terminal helix region of 16S rRNA. This is Ribosome-binding factor A from Legionella pneumophila (strain Paris).